The chain runs to 382 residues: Galactokinase (382 aa).

Residue 34 to 37 coordinates substrate; the sequence is EHTD. Position 124–130 (124–130) interacts with ATP; it reads GAGLSSS. Mg(2+)-binding residues include Ser130 and Glu162. Catalysis depends on Asp174, which acts as the Proton acceptor. Tyr223 contacts substrate.

The protein belongs to the GHMP kinase family. GalK subfamily.

It localises to the cytoplasm. The catalysed reaction is alpha-D-galactose + ATP = alpha-D-galactose 1-phosphate + ADP + H(+). It participates in carbohydrate metabolism; galactose metabolism. In terms of biological role, catalyzes the transfer of the gamma-phosphate of ATP to D-galactose to form alpha-D-galactose-1-phosphate (Gal-1-P). This chain is Galactokinase, found in Salmonella paratyphi C (strain RKS4594).